Consider the following 321-residue polypeptide: ATP-dependent 6-phosphofructokinase (321 aa).

Residue Gly11 coordinates ATP. Residue 21–25 (RAVVR) participates in ADP binding. ATP is bound by residues 72–73 (RC) and 102–105 (GDGS). Asp103 is a Mg(2+) binding site. Residue 126 to 128 (TID) participates in substrate binding. The active-site Proton acceptor is the Asp128. Arg155 lines the ADP pocket. Residues Arg163 and 170–172 (MGR) each bind substrate. ADP contacts are provided by residues 186-188 (GAE), Arg212, and 214-216 (KLH). Residues Glu223, Arg245, and 251–254 (HIQR) contribute to the substrate site.

This sequence belongs to the phosphofructokinase type A (PFKA) family. ATP-dependent PFK group I subfamily. Prokaryotic clade 'B1' sub-subfamily. As to quaternary structure, homotetramer. It depends on Mg(2+) as a cofactor.

Its subcellular location is the cytoplasm. The catalysed reaction is beta-D-fructose 6-phosphate + ATP = beta-D-fructose 1,6-bisphosphate + ADP + H(+). It functions in the pathway carbohydrate degradation; glycolysis; D-glyceraldehyde 3-phosphate and glycerone phosphate from D-glucose: step 3/4. With respect to regulation, allosterically activated by ADP and other diphosphonucleosides, and allosterically inhibited by phosphoenolpyruvate. Functionally, catalyzes the phosphorylation of D-fructose 6-phosphate to fructose 1,6-bisphosphate by ATP, the first committing step of glycolysis. In Caldanaerobacter subterraneus subsp. tengcongensis (strain DSM 15242 / JCM 11007 / NBRC 100824 / MB4) (Thermoanaerobacter tengcongensis), this protein is ATP-dependent 6-phosphofructokinase.